The chain runs to 258 residues: Cruciform cutting endonuclease 1, mitochondrial (258 aa).

Positions Met1 to Pro35 constitute an SAP domain. Positions 46 and 230 each coordinate Mg(2+).

In terms of assembly, homodimer.

It is found in the mitochondrion. The catalysed reaction is Endonucleolytic cleavage at a junction such as a reciprocal single-stranded crossover between two homologous DNA duplexes (Holliday junction).. Its function is as follows. Capable of resolving Holliday junctions. Specific for 4-way junctions. Seems to be important for the maintenance of mitochondrial DNA. Cleaves fixed junctions at the point of strand exchange. Cleaves after 5'-CT-3' and 5'-TT-3' sequences. The sequence is that of Cruciform cutting endonuclease 1, mitochondrial (cce1) from Schizosaccharomyces pombe (strain 972 / ATCC 24843) (Fission yeast).